The primary structure comprises 451 residues: Arginine biosynthesis bifunctional protein ArgJ, mitochondrial (451 aa).

T180, K209, T220, E307, N446, and T451 together coordinate substrate. The active-site Nucleophile is the T220.

The protein belongs to the ArgJ family. Heterodimer of an alpha and a beta chain. In terms of processing, the alpha and beta chains are autoproteolytically processed from a single precursor protein within the mitochondrion.

It localises to the mitochondrion matrix. The catalysed reaction is N(2)-acetyl-L-ornithine + L-glutamate = N-acetyl-L-glutamate + L-ornithine. It carries out the reaction L-glutamate + acetyl-CoA = N-acetyl-L-glutamate + CoA + H(+). The protein operates within amino-acid biosynthesis; L-arginine biosynthesis; L-ornithine and N-acetyl-L-glutamate from L-glutamate and N(2)-acetyl-L-ornithine (cyclic): step 1/1. It functions in the pathway amino-acid biosynthesis; L-arginine biosynthesis; N(2)-acetyl-L-ornithine from L-glutamate: step 1/4. Catalyzes two activities which are involved in the cyclic version of arginine biosynthesis: the synthesis of acetylglutamate from glutamate and acetyl-CoA, and of ornithine by transacetylation between acetylornithine and glutamate. The chain is Arginine biosynthesis bifunctional protein ArgJ, mitochondrial from Fusarium vanettenii (strain ATCC MYA-4622 / CBS 123669 / FGSC 9596 / NRRL 45880 / 77-13-4) (Fusarium solani subsp. pisi).